The following is a 443-amino-acid chain: MIKNDTIAAIATPPGEGSIAIVRVSGPEAIQITDKIFSGPVPSFASHTAHLGTASHHGRQIDQVLLLIMRAPRSFTGEDVVELQCHGGYFSCSQILEALVSEGARPALPGEFSQRAFLNGKIDLIQAEAIQNLIAADNLDAFHIAQNHFQGHFSQRVQKISSLIIESLAFIEVLADFPEEEQPDMEVPEKRLNEALVIIEDLISSFDEGQRLAQGTSIVLAGHPNAGKSSLLNALTNRNRAIVTDIPGTTRDILEESWTLQGKRIRLIDSAGQRETDNPVEQEGIERAISAMKQAEGILWVMDATQPPPPLPEILFQKPSLLLWNKSDLASPPRIDTSLPQLAISAKTGDGILELKQFIQKWIQKQQLGKNSKVFLVSARHHTILQQIRTYLLSAKEGLLSQLPPELVALELRQALQTTGNLSGSEINETILGEIFSRFCIGK.

(6S)-5-formyl-5,6,7,8-tetrahydrofolate contacts are provided by R23, E82, and K121. Residues 215–364 (GTSIVLAGHP…LKQFIQKWIQ (150 aa)) enclose the TrmE-type G domain. Residue N225 participates in K(+) binding. GTP is bound by residues 225–230 (NAGKSS), 244–250 (TDIPGTT), and 269–272 (DSAG). S229 contributes to the Mg(2+) binding site. The K(+) site is built by T244, I246, and T249. T250 contributes to the Mg(2+) binding site. (6S)-5-formyl-5,6,7,8-tetrahydrofolate is bound at residue K443.

It belongs to the TRAFAC class TrmE-Era-EngA-EngB-Septin-like GTPase superfamily. TrmE GTPase family. Homodimer. Heterotetramer of two MnmE and two MnmG subunits. Requires K(+) as cofactor.

The protein localises to the cytoplasm. Exhibits a very high intrinsic GTPase hydrolysis rate. Involved in the addition of a carboxymethylaminomethyl (cmnm) group at the wobble position (U34) of certain tRNAs, forming tRNA-cmnm(5)s(2)U34. This is tRNA modification GTPase MnmE from Chlamydia felis (strain Fe/C-56) (Chlamydophila felis).